Consider the following 40-residue polypeptide: WCSTCLDLACGASRECYDPCFKAFGRAHGKCMNNKCRCYT.

Disulfide bonds link C2/C5, C10/C31, C16/C36, and C20/C38.

Belongs to the short scorpion toxin superfamily. Potassium channel inhibitor family. Alpha-KTx 12 subfamily. Expressed by the venom gland.

The protein localises to the secreted. In terms of biological role, inhibits high conductance calcium-activated potassium channels. Reversibly inhibits Shaker B potassium channels. In Tityus trivittatus (Argentinean scorpion), this protein is Potassium channel toxin alpha-KTx 12.2.